The following is a 441-amino-acid chain: Ribosomal protein uS12 methylthiotransferase RimO (441 aa).

Positions 8 to 118 (PKIGFVSLGC…VLQHVHHYVP (111 aa)) constitute an MTTase N-terminal domain. Residues cysteine 17, cysteine 53, cysteine 82, cysteine 150, cysteine 154, and cysteine 157 each contribute to the [4Fe-4S] cluster site. In terms of domain architecture, Radical SAM core spans 136–373 (LTPRHYAYLK…MQLQQQISAE (238 aa)). One can recognise a TRAM domain in the interval 376–441 (QEKVGREILV…DEYDLWGSRV (66 aa)).

Belongs to the methylthiotransferase family. RimO subfamily. It depends on [4Fe-4S] cluster as a cofactor.

It is found in the cytoplasm. It catalyses the reaction L-aspartate(89)-[ribosomal protein uS12]-hydrogen + (sulfur carrier)-SH + AH2 + 2 S-adenosyl-L-methionine = 3-methylsulfanyl-L-aspartate(89)-[ribosomal protein uS12]-hydrogen + (sulfur carrier)-H + 5'-deoxyadenosine + L-methionine + A + S-adenosyl-L-homocysteine + 2 H(+). Its function is as follows. Catalyzes the methylthiolation of an aspartic acid residue of ribosomal protein uS12. The protein is Ribosomal protein uS12 methylthiotransferase RimO of Salmonella typhi.